The chain runs to 292 residues: Enoyl-CoA hydratase domain-containing protein 2, mitochondrial (292 aa).

Residues 1–35 (MLRVLCLLRPWRPLRARGCASDGAAGGSEIQVRAL) constitute a mitochondrion transit peptide. An N6-acetyllysine; alternate modification is found at lysine 97. Lysine 97 bears the N6-succinyllysine; alternate mark.

It belongs to the enoyl-CoA hydratase/isomerase family.

It localises to the mitochondrion. The polypeptide is Enoyl-CoA hydratase domain-containing protein 2, mitochondrial (ECHDC2) (Homo sapiens (Human)).